The chain runs to 424 residues: CinA-like protein (424 aa).

Belongs to the CinA family.

The protein is CinA-like protein of Prochlorococcus marinus (strain MIT 9215).